A 356-amino-acid chain; its full sequence is Trans-enoyl reductase pgmF (356 aa).

NADP(+)-binding positions include 57-60 (VDFK), 175-178 (SGGC), 198-201 (STPN), Y216, 261-262 (VG), and 342-343 (AK).

Belongs to the zinc-containing alcohol dehydrogenase family.

Functionally, FAD-linked oxidoreductase; part of the gene cluster that mediates the biosynthesis of pleosporalin A, ascomycone A, as well as a third cryptic naphthoquinone derived pigment, all responsible for the coloration of conidia. The pathway begins with the biosynthesis of the cyclized heptaketide 3-acetonyl-1,6,8-trihydroxy-2-naphthaldehyde by the NR-PKS pgmA. The C-6 hydroxyl group is further methylated by the O-methyltransferase pgmB to yield fusarubinaldehyde which is in turn oxidized by the cytochrome P450 monooxygenase pgmC at C-9. The C-1 hydroxyl group is then methylated spontaneously. Although pgmE, pgmD and pgmH are essential for the production of pleosporalin A, it is not the case for the 2 other final products and it remains difficult to assign a specific function to each enzyme. PgmF and pgmG seem not to be involved in pigment biosynthesis although they were regulated by the cluster-specific transcription factor pgmR. The sequence is that of Trans-enoyl reductase pgmF from Aspergillus terreus.